Reading from the N-terminus, the 273-residue chain is Dermonecrotic toxin LamSicTox-alphaIC1 (273 aa).

His-5 is an active-site residue. Glu-25 and Asp-27 together coordinate Mg(2+). His-41 (nucleophile) is an active-site residue. Cystine bridges form between Cys-45/Cys-51 and Cys-47/Cys-190. Asp-85 is a binding site for Mg(2+).

The protein belongs to the arthropod phospholipase D family. Class II subfamily. It depends on Mg(2+) as a cofactor. Expressed by the venom gland.

It is found in the secreted. It catalyses the reaction an N-(acyl)-sphingosylphosphocholine = an N-(acyl)-sphingosyl-1,3-cyclic phosphate + choline. The catalysed reaction is an N-(acyl)-sphingosylphosphoethanolamine = an N-(acyl)-sphingosyl-1,3-cyclic phosphate + ethanolamine. The enzyme catalyses a 1-acyl-sn-glycero-3-phosphocholine = a 1-acyl-sn-glycero-2,3-cyclic phosphate + choline. It carries out the reaction a 1-acyl-sn-glycero-3-phosphoethanolamine = a 1-acyl-sn-glycero-2,3-cyclic phosphate + ethanolamine. Dermonecrotic toxins cleave the phosphodiester linkage between the phosphate and headgroup of certain phospholipids (sphingolipid and lysolipid substrates), forming an alcohol (often choline) and a cyclic phosphate. This toxin acts on sphingomyelin (SM). It may also act on ceramide phosphoethanolamine (CPE), lysophosphatidylcholine (LPC) and lysophosphatidylethanolamine (LPE), but not on lysophosphatidylserine (LPS), and lysophosphatidylglycerol (LPG). It acts by transphosphatidylation, releasing exclusively cyclic phosphate products as second products. Induces dermonecrosis, hemolysis, increased vascular permeability, edema, inflammatory response, and platelet aggregation. The polypeptide is Dermonecrotic toxin LamSicTox-alphaIC1 (Loxosceles amazonica (Recluse spider)).